The following is a 303-amino-acid chain: Diaminopimelate epimerase (303 aa).

The substrate site is built by Asn15 and Asn72. Residue Cys81 is the Proton donor of the active site. Substrate is bound by residues 82 to 83, Asn169, Asn202, and 220 to 221; these read GN and ER. The active-site Proton acceptor is Cys229. 230 to 231 is a substrate binding site; that stretch reads GT.

The protein belongs to the diaminopimelate epimerase family. Homodimer.

It localises to the cytoplasm. The enzyme catalyses (2S,6S)-2,6-diaminopimelate = meso-2,6-diaminopimelate. It participates in amino-acid biosynthesis; L-lysine biosynthesis via DAP pathway; DL-2,6-diaminopimelate from LL-2,6-diaminopimelate: step 1/1. Catalyzes the stereoinversion of LL-2,6-diaminopimelate (L,L-DAP) to meso-diaminopimelate (meso-DAP), a precursor of L-lysine and an essential component of the bacterial peptidoglycan. The chain is Diaminopimelate epimerase from Prochlorococcus marinus (strain MIT 9313).